The following is a 1020-amino-acid chain: Non-canonical nonribosomal peptide synthetase hkm10 (1020 aa).

The adenylation (A) domain stretch occupies residues 21–419; that stretch reads QMLEDPDAIA…GRFDHQVKIR (399 aa). In terms of domain architecture, Carrier spans 526 to 608; sequence QDKVPSEGAS…QLAHIVDRNQ (83 aa). At Ser-568 the chain carries O-(pantetheine 4'-phosphoryl)serine. The segment at 652 to 894 is short-chain dehydrogenase/reductase (R) domain; sequence LTGATGFVGA…FVPIDYVTST (243 aa).

The protein belongs to the NRP synthetase family.

It participates in secondary metabolite biosynthesis. Non-canonical nonribosomal peptide synthetase; part of the gene cluster that mediates the biosynthesis of hancockiamides, an unusual new family of N-cinnamoylated piperazines. The NRPS hkm10 and the NmrA-like reductase hkm9 are proposed to convert two molecules of L-Phe to the intermediary piperazine called xenocockiamide A. Xenocockiamide A is then converted to hancockiamide D via a series of hydroxylations and O-methylations. The tyrosinase hkm6 may catalyze an aromatic hydroxylation, then the 2-oxoglutarate-dependent Fe(II) dioxygenase hkm4 and the FAD-dependent phenol hydroxylase hkm7 may catalyze consecutive hydroxylations to install 2 more hydroxy groups, and the methyltransferase hkm8 probably catalyzes two methylations using 2 molecules of S-adenosyl-L-methionine (SAM). The NRPS hkm11 activates and transfers trans-cinnamate supplied by the PAL hkm12 to hancockiamide D and produces hancockiamide A. NRPS Hkm11 has the flexibility to tolerate the bulky hancockiamide G as a substrate and the absence of the acetyl-transferase hkm3 opens up the opportunity for hkm11 to introduce a second N-cinnamoyl moiety. The cytochrome P450 monooxygenase hkm5 catalyzes the methylenedioxy bridge formation, converting hancockiamide A into hancockiamide G. Hkm5 can also convert hancockiamide B into hancockiamide C, and hancockiamide D into hancockiamide H. The N-acetyltransferase hkm3 finally transfers an acetyl group to 1-N of piperazine, converting hancockiamide A into hancockiamide B and hancockiamide G into hancockiamide C. This chain is Non-canonical nonribosomal peptide synthetase hkm10, found in Aspergillus hancockii.